Reading from the N-terminus, the 468-residue chain is Protein translocase subunit SecY (468 aa).

Residues 1 to 20 (MGARDVIYAMEKWFPEVERP) lie on the Cytoplasmic side of the membrane. Residues 21–47 (KKHVPLKEKFVWTGLALVLYYVLAEIP) form a helical membrane-spanning segment. The Extracellular segment spans residues 48 to 58 (VYGIPKKIQDY). Residues 59-66 (FQFLRVVL) constitute an intramembrane region (helical). Residues 59–87 (FQFLRVVLAGRNGSILTLGIGPIVTAGII) form a discontinuously helical membrane-spanning segment. Residues 67 to 78 (AGRNGSILTLGI) lie within the membrane without spanning it. Positions 79-87 (GPIVTAGII) form an intramembrane region, helical. Residues 88–108 (LQLLVGSELIRLDLANPEDRR) lie on the Cytoplasmic side of the membrane. The chain crosses the membrane as a helical span at residues 109–133 (FYQALQRVFSVFMCFFEAAIWVLGG). The Extracellular segment spans residues 134 to 144 (AFGRVGVDVTY). The helical transmembrane segment at 145 to 169 (TIATLMIIQLALGGIILIVLDELVS) threads the bilayer. Residues 170 to 175 (KWGIGS) are Cytoplasmic-facing. Residues 176-194 (GISLFIAAGVSQRILTRSL) form a helical membrane-spanning segment. Over 195–239 (NPLTDPNIIDPLTGKPAIVGAIPYFIQHILDGDLKGALYRGGSAP) the chain is Extracellular. A helical transmembrane segment spans residues 240–261 (DMIAVTATIIVFLVVVYFESMR). The Cytoplasmic portion of the chain corresponds to 262 to 285 (VEIPLGYRGVTIRGRYPIKFLYVS). A helical transmembrane segment spans residues 286-307 (NIPIILTFALYANIQLWARVLD). Residues 308–346 (RFGHPWLGRFDPVTGNPIGGFVLYVIPPRNIFTVIDNPV) lie on the Extracellular side of the membrane. Residues 347 to 366 (RAIIYLILTIIFSLLFGFLW) form a helical membrane-spanning segment. Over 367–409 (VELTGLDARTIARQLQRAGLQIPGFRRDPRTLERVLQKYIPYV) the chain is Cytoplasmic. Residues 410–428 (TFWGSLTVALISVLADFLG) traverse the membrane as a helical segment. Over 429 to 431 (ALG) the chain is Extracellular. Residues 432–446 (TGTGILLTVGILYRF) traverse the membrane as a helical segment. Topologically, residues 447-468 (YEEIAREQITEMFPALRRLFKG) are cytoplasmic.

It belongs to the SecY/SEC61-alpha family. In terms of assembly, component of the Sec protein translocase complex. Heterotrimer consisting of alpha (SecY), beta (SecG) and gamma (SecE) subunits. The heterotrimers can form oligomers, although 1 heterotrimer is thought to be able to translocate proteins. Interacts with the ribosome. May interact with SecDF, and other proteins may be involved.

The protein resides in the cell membrane. The central subunit of the protein translocation channel SecYEG. Consists of two halves formed by TMs 1-5 and 6-10. These two domains form a lateral gate at the front which open onto the bilayer between TMs 2 and 7, and are clamped together by SecE at the back. The channel is closed by both a pore ring composed of hydrophobic SecY resides and a short helix (helix 2A) on the extracellular side of the membrane which forms a plug. The plug probably moves laterally to allow the channel to open. The ring and the pore may move independently. The polypeptide is Protein translocase subunit SecY (Pyrococcus horikoshii (strain ATCC 700860 / DSM 12428 / JCM 9974 / NBRC 100139 / OT-3)).